Reading from the N-terminus, the 217-residue chain is Oxygen regulatory protein NreC (217 aa).

One can recognise a Response regulatory domain in the interval 2–119 (KIVIADDHAV…QLLLAVRTVY (118 aa)). Position 53 is a 4-aspartylphosphate (aspartate 53). The HTH luxR-type domain occupies 148 to 213 (TNDPFKILSK…ELVEYALKKK (66 aa)). The H-T-H motif DNA-binding region spans 172-191 (NKDIAEKLFVSVKTVEAHKT).

Phosphorylated by NreB.

The protein resides in the cytoplasm. Member of the two-component regulatory system NreB/NreC involved in the control of dissimilatory nitrate/nitrite reduction in response to oxygen. Phosphorylated NreC binds to a GC-rich palindromic sequence at the promoters of the nitrate (narGHJI) and nitrite (nir) reductase operons, as well as the putative nitrate transporter gene narT, and activates their expression. The polypeptide is Oxygen regulatory protein NreC (nreC) (Staphylococcus haemolyticus (strain JCSC1435)).